The chain runs to 189 residues: Penicillin-binding protein activator LpoB (189 aa).

The N-terminal stretch at 1–16 (MRRILFVALSVMFLAG) is a signal peptide. C17 carries the N-palmitoyl cysteine lipid modification. C17 carries the S-diacylglycerol cysteine lipid modification. Residues 18–52 (PSLPPEQPEPPTPVVPVTPSEKPTPPSEKVPEPPK) are disordered. Positions 19–45 (SLPPEQPEPPTPVVPVTPSEKPTPPSE) are enriched in pro residues.

The protein belongs to the LpoB family. As to quaternary structure, interacts with PBP1b.

It is found in the cell outer membrane. Its function is as follows. Regulator of peptidoglycan synthesis that is essential for the function of penicillin-binding protein 1B (PBP1b). This chain is Penicillin-binding protein activator LpoB, found in Photorhabdus laumondii subsp. laumondii (strain DSM 15139 / CIP 105565 / TT01) (Photorhabdus luminescens subsp. laumondii).